We begin with the raw amino-acid sequence, 261 residues long: Src-like-adapter 2 (261 aa).

Residues 1 to 10 (MGSLPSRRKS) are compositionally biased toward basic residues. The interval 1-31 (MGSLPSRRKSLPSPSLSSSVQGQGPVTMEAE) is disordered. Glycine 2 is lipidated: N-myristoyl glycine. Residues 32–92 (RSKATAVALG…PSVHVAKVSH (61 aa)) form the SH3 domain. One can recognise an SH2 domain in the interval 94 to 191 (WLYEGLSREK…DICCLLKEPC (98 aa)). Positions 195-261 (RAGPLPGKDI…NDEAVSLDDA (67 aa)) are SLA C-terminal.

Interacts (via SH2 domain) with ZAP70 (phosphorylated) and CD3Z (phosphorylated). Interacts (via SH2 domain) with CSF1R (phosphorylated). Interacts (via its C-terminal domain) with CBL (phosphorylated). Phosphorylated by CSF1R. In terms of tissue distribution, predominantly expressed in immune system, with highest levels in peripheral blood leukocytes. Expressed in spleen, thymus and lymph nodes. Expressed in T-cells as well as in monocytes, and at low level in B-cells. Also detected in placenta, prostate, skin, retina and colon.

Its subcellular location is the cytoplasm. The protein localises to the cell membrane. It is found in the cytoplasmic vesicle. In terms of biological role, adapter protein, which negatively regulates T-cell receptor (TCR) signaling. Inhibits T-cell antigen-receptor induced activation of nuclear factor of activated T-cells. May act by linking signaling proteins such as ZAP70 with CBL, leading to a CBL dependent degradation of signaling proteins. This Homo sapiens (Human) protein is Src-like-adapter 2 (SLA2).